A 176-amino-acid polypeptide reads, in one-letter code: MSVAAARSSAVKVDWGKIVSSLGLTGATVSSLQAFRKRHEEAKKNAYELQNQPTTVDFAHYRKVLKNQKVVDEIEQHFKSFKPVTYDVSKQLKTIDAFEAKAIEDAKATEGKVNQEIGDLQKTLENIESARPFDQLSVDDVFKARPDLEKKIEEMVKKGRWSVPGYNEKFGSVVLM.

F-type ATP synthases have 2 components, the catalytic core F(1) and the membrane-embedded component F(0), linked together by a central stalk and a peripheral stalk. The central stalk, also called rotor shaft, is often seen as part of F(1). The peripheral stalk is seen as part of F(0). F(0) contains the membrane channel next to the rotor. F-type ATP synthases form dimers but each monomer functions independently in ATP generation. The dimer consists of 17 different polypeptides: ATP1 (subunit alpha, 3 molecules per monomer, part of F(1)), ATP2 (subunit beta, 3 copies per monomer, part of F(1)), ATP3 (subunit gamma, part of the central stalk), ATP4 (subunit b, part of the peripheral stalk), ATP5/OSCP (subunit 5/OSCP, part of the peripheral stalk), ATP6 (subunit a, part of the peripheral stalk), ATP7 (subunit d, part of the peripheral stalk), ATP8 (subunit 8, part of the peripheral stalk), OLI1 (subunit c, part of the rotor, 10 molecules per monomer), ATP14 (subunit h, part of the peripheral stalk), ATP15 (subunit epsilon, part of the central stalk), ATP16 (subunit delta, part of the central stalk), ATP17 (subunit f, part of the peripheral stalk), ATP18 (subunit i/j, part of the peripheral stalk), ATP19 (subunit k, dimer-specific, at interface between monomers), ATP20 (subunit g, at interface between monomers), TIM11 (subunit e, at interface between monomers).

The protein localises to the mitochondrion inner membrane. Functionally, mitochondrial membrane ATP synthase (F(1)F(0) ATP synthase or Complex V) produces ATP from ADP in the presence of a proton gradient across the membrane which is generated by electron transport complexes of the respiratory chain. F-type ATP synthases consist of two structural domains, F(1) - containing the extramembraneous catalytic core, and F(0) - containing the membrane proton channel, linked together by a central stalk and a peripheral stalk. During catalysis, ATP synthesis in the catalytic domain of F(1) is coupled via a rotary mechanism of the central stalk subunits to proton translocation. Part of the complex F(0) domain and the peripheral stalk, which acts as a stator to hold the catalytic alpha/ATP1(3)beta/ATP2(3) subcomplex and subunit a/ATP6 static relative to the rotary elements. The sequence is that of ATP synthase subunit d, mitochondrial from Yarrowia lipolytica (strain CLIB 122 / E 150) (Yeast).